Here is an 88-residue protein sequence, read N- to C-terminus: HssA/B-like protein 12 (88 aa).

Belongs to the hssA/B family.

In Dictyostelium discoideum (Social amoeba), this protein is HssA/B-like protein 12 (hssl12).